We begin with the raw amino-acid sequence, 285 residues long: (2Z,6Z)-farnesyl diphosphate synthase CPT6, chloroplastic (285 aa).

The transit peptide at 1–30 (MNSLFVGRPIVKSSYNVYTLPSSICGGHFF) directs the protein to the chloroplast. Residue aspartate 65 is part of the active site.

It belongs to the UPP synthase family. Mg(2+) is required as a cofactor. As to expression, expressed in roots and red fruits.

The protein localises to the plastid. Its subcellular location is the chloroplast. The enzyme catalyses 2 isopentenyl diphosphate + dimethylallyl diphosphate = (2Z,6Z)-farnesyl diphosphate + 2 diphosphate. It catalyses the reaction isopentenyl diphosphate + dimethylallyl diphosphate = neryl diphosphate + diphosphate. It carries out the reaction neryl diphosphate + isopentenyl diphosphate = (2Z,6Z)-farnesyl diphosphate + diphosphate. Functionally, uses neryl diphosphate to catalyze the cis-prenyl chain elongation and produce the 15 carbon product (2Z,6Z)-farnesyl diphosphate. The polypeptide is (2Z,6Z)-farnesyl diphosphate synthase CPT6, chloroplastic (Solanum lycopersicum (Tomato)).